The chain runs to 183 residues: UPF0398 protein MCCL_1095 (183 aa).

Belongs to the UPF0398 family.

This is UPF0398 protein MCCL_1095 from Macrococcus caseolyticus (strain JCSC5402) (Macrococcoides caseolyticum).